Reading from the N-terminus, the 85-residue chain is UPF0434 protein HNE_3545 (85 aa).

The protein belongs to the UPF0434 family.

The sequence is that of UPF0434 protein HNE_3545 from Hyphomonas neptunium (strain ATCC 15444).